Here is a 139-residue protein sequence, read N- to C-terminus: Holo-[acyl-carrier-protein] synthase (139 aa).

Mg(2+)-binding residues include Asp8 and Glu61.

The protein belongs to the P-Pant transferase superfamily. AcpS family. Mg(2+) serves as cofactor.

It localises to the cytoplasm. The enzyme catalyses apo-[ACP] + CoA = holo-[ACP] + adenosine 3',5'-bisphosphate + H(+). In terms of biological role, transfers the 4'-phosphopantetheine moiety from coenzyme A to a Ser of acyl-carrier-protein. The chain is Holo-[acyl-carrier-protein] synthase from Nitrobacter hamburgensis (strain DSM 10229 / NCIMB 13809 / X14).